A 1054-amino-acid polypeptide reads, in one-letter code: Probable sucrose-phosphate synthase 1 (1054 aa).

Residues 104 to 115 are compositionally biased toward basic and acidic residues; it reads RLERERGRREAV. 3 disordered regions span residues 104–125, 674–693, and 708–727; these read RLERERGRREAVADMSEDLSEG, LRNEEDDDENSESDSPSDSL, and DGDKNESREKGGGSHPDDRA.

It belongs to the glycosyltransferase 1 family. As to quaternary structure, homodimer or homotetramer.

The catalysed reaction is beta-D-fructose 6-phosphate + UDP-alpha-D-glucose = sucrose 6(F)-phosphate + UDP + H(+). It participates in glycan biosynthesis; sucrose biosynthesis; sucrose from D-fructose 6-phosphate and UDP-alpha-D-glucose: step 1/2. Its activity is regulated as follows. Activity is regulated by phosphorylation and moderated by concentration of metabolites and light. Plays a role in photosynthetic sucrose synthesis by catalyzing the rate-limiting step of sucrose biosynthesis from UDP-glucose and fructose- 6-phosphate. Involved in the regulation of carbon partitioning in the leaves of plants. May regulate the synthesis of sucrose and therefore play a major role as a limiting factor in the export of photoassimilates out of the leaf. Plays a role for sucrose availability that is essential for plant growth and fiber elongation. This is Probable sucrose-phosphate synthase 1 (SPS1) from Craterostigma plantagineum (Blue gem).